A 175-amino-acid chain; its full sequence is Crossover junction endodeoxyribonuclease RuvC (175 aa).

Residues D8, E69, and D141 contribute to the active site. The Mg(2+) site is built by D8, E69, and D141.

This sequence belongs to the RuvC family. As to quaternary structure, homodimer which binds Holliday junction (HJ) DNA. The HJ becomes 2-fold symmetrical on binding to RuvC with unstacked arms; it has a different conformation from HJ DNA in complex with RuvA. In the full resolvosome a probable DNA-RuvA(4)-RuvB(12)-RuvC(2) complex forms which resolves the HJ. Mg(2+) is required as a cofactor.

It is found in the cytoplasm. The catalysed reaction is Endonucleolytic cleavage at a junction such as a reciprocal single-stranded crossover between two homologous DNA duplexes (Holliday junction).. The RuvA-RuvB-RuvC complex processes Holliday junction (HJ) DNA during genetic recombination and DNA repair. Endonuclease that resolves HJ intermediates. Cleaves cruciform DNA by making single-stranded nicks across the HJ at symmetrical positions within the homologous arms, yielding a 5'-phosphate and a 3'-hydroxyl group; requires a central core of homology in the junction. The consensus cleavage sequence is 5'-(A/T)TT(C/G)-3'. Cleavage occurs on the 3'-side of the TT dinucleotide at the point of strand exchange. HJ branch migration catalyzed by RuvA-RuvB allows RuvC to scan DNA until it finds its consensus sequence, where it cleaves and resolves the cruciform DNA. This Colwellia psychrerythraea (strain 34H / ATCC BAA-681) (Vibrio psychroerythus) protein is Crossover junction endodeoxyribonuclease RuvC.